We begin with the raw amino-acid sequence, 145 residues long: MKFNPFVTSDRSKNRKRHFNAPSHIRRKIMSSPLSKELRQKYNVRSMPIRKDDEVQVVRGHYKGQQIGKVVQVYRKKYVIYIERVQREKANGTTVHVGIRPSKVVITRLKLDKDRKKILERKAKSRQVGKEKGKYKEETIEKMQE.

Disordered stretches follow at residues 1 to 21 and 122 to 145; these read MKFNPFVTSDRSKNRKRHFNA and KAKSRQVGKEKGKYKEETIEKMQE. K136 is covalently cross-linked (Glycyl lysine isopeptide (Lys-Gly) (interchain with G-Cter in SUMO2)). At T139 the chain carries Phosphothreonine.

This sequence belongs to the universal ribosomal protein uL24 family. As to quaternary structure, component of the large ribosomal subunit. Interacts with DHX33. Post-translationally, ufmylated by UFL1 in response to endoplasmic reticulum stress, promoting reticulophagy of endoplasmic reticulum sheets.

It is found in the cytoplasm. Component of the large ribosomal subunit. The ribosome is a large ribonucleoprotein complex responsible for the synthesis of proteins in the cell. The polypeptide is Large ribosomal subunit protein uL24 (Rpl26) (Rattus norvegicus (Rat)).